The primary structure comprises 244 residues: Heat shock transcription factor (244 aa).

A DNA-binding region spans residues 13–108 (IPKFIMKLYK…LLGFDDSLRM (96 aa)). Residues 123–168 (DGSLKEIVEYLYVQNQELYTELSVCKERIERQERALNGLIEILSRV) form an involved in trimerization region. Residues 204–244 (EGCEPASPPLQDKGIPELSFKPGGIPHADSDTKDDNYDPFF) form a disordered region. Positions 231–244 (ADSDTKDDNYDPFF) are enriched in basic and acidic residues.

This sequence belongs to the HSF family. In terms of assembly, homotrimer. Homotrimerization increases the affinity of HSF1 to DNA.

Its subcellular location is the nucleus. In terms of biological role, DNA-binding transcription factor that specifically binds heat shock promoter elements (HSE) and activates transcription. This is Heat shock transcription factor from Encephalitozoon cuniculi (strain GB-M1) (Microsporidian parasite).